A 556-amino-acid chain; its full sequence is Formate--tetrahydrofolate ligase (556 aa).

65–72 (TPAGEGKS) is a binding site for ATP.

It belongs to the formate--tetrahydrofolate ligase family.

It carries out the reaction (6S)-5,6,7,8-tetrahydrofolate + formate + ATP = (6R)-10-formyltetrahydrofolate + ADP + phosphate. It participates in one-carbon metabolism; tetrahydrofolate interconversion. The sequence is that of Formate--tetrahydrofolate ligase from Streptococcus agalactiae serotype V (strain ATCC BAA-611 / 2603 V/R).